Consider the following 485-residue polypeptide: Glutamyl-tRNA(Gln) amidotransferase subunit A (485 aa).

Catalysis depends on charge relay system residues Lys76 and Ser152. Ser176 acts as the Acyl-ester intermediate in catalysis.

Belongs to the amidase family. GatA subfamily. Heterotrimer of A, B and C subunits.

The enzyme catalyses L-glutamyl-tRNA(Gln) + L-glutamine + ATP + H2O = L-glutaminyl-tRNA(Gln) + L-glutamate + ADP + phosphate + H(+). Functionally, allows the formation of correctly charged Gln-tRNA(Gln) through the transamidation of misacylated Glu-tRNA(Gln) in organisms which lack glutaminyl-tRNA synthetase. The reaction takes place in the presence of glutamine and ATP through an activated gamma-phospho-Glu-tRNA(Gln). The sequence is that of Glutamyl-tRNA(Gln) amidotransferase subunit A from Dechloromonas aromatica (strain RCB).